The primary structure comprises 257 residues: GTP cyclohydrolase FolE2 (257 aa).

Belongs to the GTP cyclohydrolase IV family.

The catalysed reaction is GTP + H2O = 7,8-dihydroneopterin 3'-triphosphate + formate + H(+). Its pathway is cofactor biosynthesis; 7,8-dihydroneopterin triphosphate biosynthesis; 7,8-dihydroneopterin triphosphate from GTP: step 1/1. Its function is as follows. Converts GTP to 7,8-dihydroneopterin triphosphate. The protein is GTP cyclohydrolase FolE2 of Pelobacter propionicus (strain DSM 2379 / NBRC 103807 / OttBd1).